Here is a 577-residue protein sequence, read N- to C-terminus: MWYPGDEDEEFTSIIENIEKKETQEIKIKTEKLRQASLNQLPIEQSEGVGGGELSEYNNNTTNNNTPTNTTTTTNTNTTTMNNSNNNNERILSTSNGFDIRLPPNSIEQPSPSFISSSQDGVLTVDPLAVDGEKGNKESQSPPNGDNQILNNNNMFFKDITSLPSTDNKSSTNTNNNNNENPLKQTISSSPSKSTTTTTTSTSTTTTPSLSSLSSNNNNNSNSNNNYINHSSISTVSEGLENLNLKSGIKKIDSETEKYIEEGKQVFVNFLKGHTCYDVIPISGKVVVLDTKLAVKSAFYALEENGIKSAPLWNSEQHDFTGMITVSDFIDILLYYYKKPKSNNIFQDMGIHRIETFWREISVERPSSLISTEPETNLYDAASLLLCYKIHRLPVVDKKDTNSILHILTHSRILAFMMKSFPQLPEKLLSIPIGSLGIGTFATVVTVMTHTPLVEVLELLSEKKISAVPIIDSETSKIVDVYSKSDVTLMSKQGILSPSDLNLPVHQVLSTFTKLWQRPEQIYTCTRFDKLGDVIERCIKKRVHRLVCIDSSKKVEGILSLSDILNYLLNDVKSINH.

The segment at 45-226 (QSEGVGGGEL…NNNNSNSNNN (182 aa)) is disordered. Residues 58-88 (NNNTTNNNTPTNTTTTTNTNTTTMNNSNNNN) show a composition bias toward low complexity. Polar residues-rich tracts occupy residues 106–121 (SIEQ…SQDG) and 138–155 (ESQS…NNNM). Positions 165 to 226 (STDNKSSTNT…NNNNSNSNNN (62 aa)) are enriched in low complexity. 4 consecutive CBS domains span residues 279–341 (VIPI…KKPK), 364–426 (ERPS…QLPE), 438–499 (IGTF…LSPS), and 517–574 (QRPE…DVKS).

Belongs to the 5'-AMP-activated protein kinase gamma subunit family.

Functionally, AMPK may be responsible for the regulation of fatty acid synthesis by phosphorylation of acetyl-CoA carboxylase. In Dictyostelium discoideum (Social amoeba), this protein is 5'-AMP-activated protein kinase subunit gamma (prkag).